A 209-amino-acid chain; its full sequence is Iron-sulfur cluster assembly 2 homolog, mitochondrial (209 aa).

The transit peptide at 1–27 (MIRSIFKKNSSLPYFLKRSFITKPHSI) directs the protein to the mitochondrion. 3 residues coordinate Fe cation: C134, C199, and C201.

The protein belongs to the HesB/IscA family. Fe cation is required as a cofactor.

The protein localises to the mitochondrion. Involved in the maturation of mitochondrial 4Fe-4S proteins functioning late in the iron-sulfur cluster assembly pathway. May be involved in the binding of an intermediate of Fe/S cluster assembly. The polypeptide is Iron-sulfur cluster assembly 2 homolog, mitochondrial (isca2) (Dictyostelium discoideum (Social amoeba)).